A 188-amino-acid polypeptide reads, in one-letter code: ATP synthase subunit b (188 aa).

Residues 7–26 (TAAAGAMTLFFASMAYASGD) form a helical membrane-spanning segment.

This sequence belongs to the ATPase B chain family. As to quaternary structure, F-type ATPases have 2 components, F(1) - the catalytic core - and F(0) - the membrane proton channel. F(1) has five subunits: alpha(3), beta(3), gamma(1), delta(1), epsilon(1). F(0) has three main subunits: a(1), b(2) and c(10-14). The alpha and beta chains form an alternating ring which encloses part of the gamma chain. F(1) is attached to F(0) by a central stalk formed by the gamma and epsilon chains, while a peripheral stalk is formed by the delta and b chains.

The protein resides in the cell inner membrane. In terms of biological role, f(1)F(0) ATP synthase produces ATP from ADP in the presence of a proton or sodium gradient. F-type ATPases consist of two structural domains, F(1) containing the extramembraneous catalytic core and F(0) containing the membrane proton channel, linked together by a central stalk and a peripheral stalk. During catalysis, ATP synthesis in the catalytic domain of F(1) is coupled via a rotary mechanism of the central stalk subunits to proton translocation. Functionally, component of the F(0) channel, it forms part of the peripheral stalk, linking F(1) to F(0). This is ATP synthase subunit b from Nitratidesulfovibrio vulgaris (strain DP4) (Desulfovibrio vulgaris).